We begin with the raw amino-acid sequence, 315 residues long: 31 kDa ribonucleoprotein, chloroplastic (315 aa).

A chloroplast-targeting transit peptide spans methionine 1–serine 71. Residues alanine 114–proline 133 are disordered. A compositionally biased stretch (acidic residues) spans glycine 115 to proline 133. 2 RRM domains span residues alanine 136 to arginine 214 and tyrosine 230 to aspartate 308.

The protein resides in the plastid. Its subcellular location is the chloroplast. In terms of biological role, could be involved in splicing and/or processing of chloroplast RNA's. The chain is 31 kDa ribonucleoprotein, chloroplastic from Nicotiana sylvestris (Wood tobacco).